Reading from the N-terminus, the 220-residue chain is Botcinic acid biosynthesis cluster B protein 12 (220 aa).

The protein operates within polyketide biosynthesis. Its function is as follows. Part of the gene cluster B that mediates the biosynthesis of botcinic acid and its botcinin derivatives, acetate-derived polyketides that contribute to virulence when combined with the sesquiterpene botrydial. Botcinic acid and its derivatives have been shown to induce chlorosis and necrosis during host plant infection, but also have antifungal activities. Two polyketide synthases, BOA6 and BOA9, are involved in the biosynthesis of botcinins. BOA6 mediates the formation of the per-methylated tetraketide core by condensation of four units of malonyl-CoA with one unit of acetyl-CoA, which would be methylated in activated methylene groups to yield a bicyclic acid intermediate that could then either be converted to botrylactone derivatives or lose the starter acetate unit through a retro-Claisen type C-C bond cleavage to yield botcinin derivatives. The second polyketide synthase, BOA9, is probably required for the biosynthesis of the tetraketide side chain of botcinins. The methyltransferase (MT) domain within BOA6 is probably responsible for the incorporation of four methyl groups. The trans-enoyl reductase BOA5 might take over the enoyl reductase function of BOA6 that misses an ER domain. The monooxygenases BOA2, BOA3 and BOA4 might be involved in further hydroxylations at C4, C5 and C8, whereas BOA7, close to BOA9, could potentially be involved in the hydroxylation at C4 in the side chain of botcinins. This chain is Botcinic acid biosynthesis cluster B protein 12, found in Botryotinia fuckeliana (strain B05.10) (Noble rot fungus).